Reading from the N-terminus, the 397-residue chain is N(6)-adenosine-methyltransferase non-catalytic subunit METTL14 (397 aa).

Disordered regions lie at residues asparagine 37–proline 67 and glutamate 368–arginine 397. The segment covering aspartate 40 to glycine 51 has biased composition (polar residues). Residues leucine 382–arginine 397 show a composition bias toward basic residues.

This sequence belongs to the MT-A70-like family. As to quaternary structure, component of the WMM complex, a N6-methyltransferase complex composed of a catalytic subcomplex, named MAC, and of an associated subcomplex, named MACOM. The MAC subcomplex is composed of Ime4/Mettl3 and Mettl14. The MACOM subcomplex is composed of fl(2)d, Flacc/Xio, Hakai, vir, and, in some cases of nito.

Its subcellular location is the nucleus. Its function is as follows. Non-catalytic component of the WMM complex, a complex that mediates N6-methyladenosine (m6A) methylation of mRNAs, a modification that plays a role in the efficiency of mRNA splicing and is required for sex determination. In the heterodimer formed with Ime4/Mettl3, Mettl14 constitutes the RNA-binding scaffold that recognizes the substrate rather than the catalytic core. Required for sex determination and dosage compensation via Sxl alternative splicing: m6A methylation acts as a key regulator of Sxl pre-mRNA and promotes female-specific alternative splicing of Sxl, which determines female physiognomy. M6A methylation is also required for neuronal functions. The sequence is that of N(6)-adenosine-methyltransferase non-catalytic subunit METTL14 from Drosophila melanogaster (Fruit fly).